A 1004-amino-acid polypeptide reads, in one-letter code: 2-oxoglutarate dehydrogenase E1 component (1004 aa).

Belongs to the alpha-ketoglutarate dehydrogenase family. Homodimer. Part of the 2-oxoglutarate dehydrogenase (OGDH) complex composed of E1 (2-oxoglutarate dehydrogenase), E2 (dihydrolipoamide succinyltransferase) and E3 (dihydrolipoamide dehydrogenase); the complex contains multiple copies of the three enzymatic components (E1, E2 and E3). The cofactor is thiamine diphosphate.

The enzyme catalyses N(6)-[(R)-lipoyl]-L-lysyl-[protein] + 2-oxoglutarate + H(+) = N(6)-[(R)-S(8)-succinyldihydrolipoyl]-L-lysyl-[protein] + CO2. In terms of biological role, E1 component of the 2-oxoglutarate dehydrogenase (OGDH) complex which catalyzes the decarboxylation of 2-oxoglutarate, the first step in the conversion of 2-oxoglutarate to succinyl-CoA and CO(2). The sequence is that of 2-oxoglutarate dehydrogenase E1 component from Brucella ovis (strain ATCC 25840 / 63/290 / NCTC 10512).